The chain runs to 332 residues: Glycerol-3-phosphate dehydrogenase [NAD(P)+] (332 aa).

The NADPH site is built by Ser11, Phe12, Lys32, and Lys106. 3 residues coordinate sn-glycerol 3-phosphate: Lys106, Gly137, and Ser139. Ala141 serves as a coordination point for NADPH. The sn-glycerol 3-phosphate site is built by Lys192, Asp245, Ser255, Arg256, and Asn257. Lys192 functions as the Proton acceptor in the catalytic mechanism. Arg256 serves as a coordination point for NADPH. NADPH-binding residues include Val280 and Glu282.

The protein belongs to the NAD-dependent glycerol-3-phosphate dehydrogenase family.

Its subcellular location is the cytoplasm. It catalyses the reaction sn-glycerol 3-phosphate + NAD(+) = dihydroxyacetone phosphate + NADH + H(+). The enzyme catalyses sn-glycerol 3-phosphate + NADP(+) = dihydroxyacetone phosphate + NADPH + H(+). It functions in the pathway membrane lipid metabolism; glycerophospholipid metabolism. In terms of biological role, catalyzes the reduction of the glycolytic intermediate dihydroxyacetone phosphate (DHAP) to sn-glycerol 3-phosphate (G3P), the key precursor for phospholipid synthesis. This Staphylococcus epidermidis (strain ATCC 35984 / DSM 28319 / BCRC 17069 / CCUG 31568 / BM 3577 / RP62A) protein is Glycerol-3-phosphate dehydrogenase [NAD(P)+].